Reading from the N-terminus, the 431-residue chain is Mothers against decapentaplegic homolog 6 (431 aa).

The span at Met-1 to Arg-15 shows a compositional bias: basic residues. Positions Met-1–Ala-95 are disordered. The segment covering Gly-29–Ala-38 has biased composition (polar residues). Positions Pro-71–Pro-90 are enriched in pro residues. Residues Ala-85–Pro-209 form the MH1 domain. Zn(2+)-binding residues include Cys-139, Cys-182, Cys-194, and His-199. A compositionally biased stretch (polar residues) spans Thr-235 to Val-245. The tract at residues Thr-235 to Asp-258 is disordered. The 167-residue stretch at Trp-265 to Arg-431 folds into the MH2 domain.

The protein belongs to the dwarfin/SMAD family. Developing heart, eyes and limbs.

The protein localises to the nucleus. Its function is as follows. Transforming growth factor-beta superfamily receptors signaling occurs through the Smad family of intracellular mediators. SMAD6 is an inhibitory Smad (i-Smad) that negatively regulates signaling downstream of type I transforming growth factor-beta. Acts as a mediator of TGF-beta and BMP anti-inflammatory activities. Suppresses IL1R-TLR signaling through its direct interaction with PEL1, preventing NF-kappa-B activation, nuclear transport and NF-kappa-B-mediated expression of pro-inflammatory genes. Blocks the BMP-SMAD1 signaling pathway by competing with SMAD4 for receptor-activated SMAD1-binding. Binds to regulatory elements in target promoter regions. The chain is Mothers against decapentaplegic homolog 6 (SMAD6) from Gallus gallus (Chicken).